Here is a 231-residue protein sequence, read N- to C-terminus: 4-aminobenzoate synthase (231 aa).

Fe(2+) is bound by residues E81, H88, E142, H174, D178, and H181.

It belongs to the CADD family. In terms of assembly, homodimer. During infection, interacts with death domains of mammalian tumor necrosis factor (TNF) family receptors Fas, DR4, DR5 and to some extent TNFR1, but not with the respective downstream adapters. The cofactor is Fe(2+). Mn(2+) serves as cofactor.

The protein resides in the secreted. It localises to the host cytoplasm. With respect to regulation, the protein is a cosubstrate rather than a true enzyme and is left in an inactive state after a single turnover. Inactive under anaerobic conditions. Its function is as follows. Involved in de novo para-aminobenzoate (PABA) biosynthesis. Acts as a self-sacrificing or 'suicide' enzyme that utilizes its own active site tyrosine residue(s) as the substrate for PABA synthesis. The side chain of the tyrosine residue is released from the protein backbone via cleavage of the C(alpha)-C(beta) bond, leaving a glycine in place of the original tyrosine residue. Reaction requires O(2) and a reduced dimetal cofactor. In terms of biological role, was also identified as a specific toxin that associates with death domains of tumor necrosis factor family (TNF) receptors and induces apoptosis in mammalian cell lines through a Caspase-dependent mechanism. The sequence is that of 4-aminobenzoate synthase from Chlamydia trachomatis serovar D (strain ATCC VR-885 / DSM 19411 / UW-3/Cx).